Consider the following 367-residue polypeptide: Phospho-N-acetylmuramoyl-pentapeptide-transferase (367 aa).

The next 10 membrane-spanning stretches (helical) occupy residues Ala-30–Leu-50, Leu-71–Ala-91, Thr-94–Ile-114, Ile-138–Met-158, Leu-169–Ser-189, Gly-200–Ala-220, Gly-237–Phe-257, Ile-264–Leu-284, Leu-289–Val-309, and Lys-344–Leu-364.

The protein belongs to the glycosyltransferase 4 family. MraY subfamily. Requires Mg(2+) as cofactor.

Its subcellular location is the cell inner membrane. It catalyses the reaction UDP-N-acetyl-alpha-D-muramoyl-L-alanyl-gamma-D-glutamyl-meso-2,6-diaminopimeloyl-D-alanyl-D-alanine + di-trans,octa-cis-undecaprenyl phosphate = di-trans,octa-cis-undecaprenyl diphospho-N-acetyl-alpha-D-muramoyl-L-alanyl-D-glutamyl-meso-2,6-diaminopimeloyl-D-alanyl-D-alanine + UMP. Its pathway is cell wall biogenesis; peptidoglycan biosynthesis. Its function is as follows. Catalyzes the initial step of the lipid cycle reactions in the biosynthesis of the cell wall peptidoglycan: transfers peptidoglycan precursor phospho-MurNAc-pentapeptide from UDP-MurNAc-pentapeptide onto the lipid carrier undecaprenyl phosphate, yielding undecaprenyl-pyrophosphoryl-MurNAc-pentapeptide, known as lipid I. The polypeptide is Phospho-N-acetylmuramoyl-pentapeptide-transferase (Chlorobium phaeovibrioides (strain DSM 265 / 1930) (Prosthecochloris vibrioformis (strain DSM 265))).